Reading from the N-terminus, the 444-residue chain is D(2) dopamine receptor (444 aa).

Residues 1–37 (MDPLNLSWYDDDPESRNWSRPFNGSEGKADRPPYNYY) are Extracellular-facing. Asparagine 5, asparagine 17, and asparagine 23 each carry an N-linked (GlcNAc...) asparagine glycan. A helical transmembrane segment spans residues 38-60 (AMLLTLLIFVIVFGNVLVCMAVS). The Cytoplasmic segment spans residues 61 to 70 (REKALQTTTN). Residues 71 to 93 (YLIVSLAVADLLVATLVMPWVVY) form a helical membrane-spanning segment. Residues 94 to 108 (LEVVGEWKFSRIHCD) lie on the Extracellular side of the membrane. Cysteine 107 and cysteine 182 form a disulfide bridge. Residues 109 to 130 (IFVTLDVMMCTASILNLCAISI) form a helical membrane-spanning segment. The Cytoplasmic segment spans residues 131–151 (DRYTAVAMPMLYNTRYSSKRR). A helical membrane pass occupies residues 152-172 (VTVMIAIVWVLSFTISCPMLF). Residues 173–188 (GLNNTDQNECIIANPA) are Extracellular-facing. The chain crosses the membrane as a helical span at residues 189–213 (FVVYSSIVSFYVPFIVTLLVYIKIY). The interval 211–374 (KIYIVLRRRR…SQQKEKKATQ (164 aa)) is interaction with PPP1R9B. Topologically, residues 214–374 (IVLRRRRKRV…SQQKEKKATQ (161 aa)) are cytoplasmic. Residues 281-332 (MEMLSSTSPPERTRYSPIPPSHHQLTLPDPSHHGLHSTPDSPAKPEKNGHAK) are disordered. The chain crosses the membrane as a helical span at residues 375–396 (MLAIVLGVFIICWLPFFITHIL). The Extracellular segment spans residues 397–410 (NIHCDCNIPPVLYS). Cysteine 400 and cysteine 402 are joined by a disulfide. The helical transmembrane segment at 411–432 (AFTWLGYVNSAVNPIIYTTFNI) threads the bilayer. The Cytoplasmic segment spans residues 433 to 444 (EFRKAFLKILHC). Cysteine 444 is lipidated: S-palmitoyl cysteine.

This sequence belongs to the G-protein coupled receptor 1 family. Forms homo- and heterooligomers with DRD4. The interaction with DRD4 may modulate agonist-induced downstream signaling. Interacts with CADPS and CADPS2. Interacts with GPRASP1, PPP1R9B and CLIC6. Interacts with ARRB2. Interacts with HTR2A. Interacts with DRD1. Interacts with KCNA2. Post-translationally, palmitoylated. Palmitoylation which is required for proper localization to the plasma membrane and stability of the receptor could be carried on by ZDHHC4, ZDHHC3 and ZDHHC8.

The protein resides in the cell membrane. The protein localises to the golgi apparatus membrane. Its function is as follows. Dopamine receptor whose activity is mediated by G proteins which inhibit adenylyl cyclase. Positively regulates postnatal regression of retinal hyaloid vessels via suppression of VEGFR2/KDR activity, downstream of OPN5. In Bos taurus (Bovine), this protein is D(2) dopamine receptor (DRD2).